The sequence spans 393 residues: MLNSLDLEGPPSSTRVVVAMSGGVDSSTTAALLKAEGYDVIGITLQLYDHGEATHRKGACCAGQDIHDARDVAERIGIPHYVLDYESRFRESVIDRFAESYALGETPVPCIECNRSVKFRDLLTTAQELGAQALATGHYVASRRQPDGSRAMVCAADADRDQSYFLFATTQDQLNHLRFPLGDMTKAQTRELARRFDLPVAEKHDSQDICFVPTGRYTDVIERMRPNAMLPGDIVDLRGRVLGHHQGIANFTVGQRRGIGIAASMPLYVVALDAASRQVIVGPRAALRKNLITLRDINWIGDGTFDDVAREGRDLYIKVRSTRPPQPAHLRMNGDHCEVELFAGEEGVSPGQACVFYDAPTGQARVLGGGFITHASNNSDRAGTHHLALRAAI.

ATP-binding positions include 19–26 and leucine 45; that span reads AMSGGVDS. Cysteine 113 serves as the catalytic Nucleophile. The cysteines at positions 113 and 210 are disulfide-linked. ATP is bound at residue glycine 137. Residues 160–162 form an interaction with tRNA region; the sequence is RDQ. The active-site Cysteine persulfide intermediate is the cysteine 210.

It belongs to the MnmA/TRMU family.

The protein localises to the cytoplasm. The catalysed reaction is S-sulfanyl-L-cysteinyl-[protein] + uridine(34) in tRNA + AH2 + ATP = 2-thiouridine(34) in tRNA + L-cysteinyl-[protein] + A + AMP + diphosphate + H(+). Its function is as follows. Catalyzes the 2-thiolation of uridine at the wobble position (U34) of tRNA, leading to the formation of s(2)U34. The polypeptide is tRNA-specific 2-thiouridylase MnmA (Afipia carboxidovorans (strain ATCC 49405 / DSM 1227 / KCTC 32145 / OM5) (Oligotropha carboxidovorans)).